Reading from the N-terminus, the 202-residue chain is Peptide deformylase 2 (202 aa).

Positions 120 and 162 each coordinate Fe cation. Glu-163 is a catalytic residue. A Fe cation-binding site is contributed by His-166.

This sequence belongs to the polypeptide deformylase family. The cofactor is Fe(2+).

The catalysed reaction is N-terminal N-formyl-L-methionyl-[peptide] + H2O = N-terminal L-methionyl-[peptide] + formate. Functionally, removes the formyl group from the N-terminal Met of newly synthesized proteins. Requires at least a dipeptide for an efficient rate of reaction. N-terminal L-methionine is a prerequisite for activity but the enzyme has broad specificity at other positions. This Rickettsia conorii (strain ATCC VR-613 / Malish 7) protein is Peptide deformylase 2.